Reading from the N-terminus, the 433-residue chain is Ornithine decarboxylase, chloroplastic (433 aa).

Position 96 is an N6-(pyridoxal phosphate)lysine (Lys-96). Pyridoxal 5'-phosphate contacts are provided by residues Ser-228, Gly-266, and 299 to 302; that span reads EPGR. 342–343 serves as a coordination point for substrate; that stretch reads YD. Residue Cys-378 is the Proton donor; shared with dimeric partner of the active site. Substrate is bound at residue Asp-379. Residue Tyr-407 coordinates pyridoxal 5'-phosphate.

The protein belongs to the Orn/Lys/Arg decarboxylase class-II family. In terms of assembly, homodimer. Only the dimer is catalytically active, as the active sites are constructed of residues from both monomers. It depends on pyridoxal 5'-phosphate as a cofactor.

It is found in the plastid. Its subcellular location is the chloroplast. It carries out the reaction L-ornithine + H(+) = putrescine + CO2. The protein operates within alkaloid biosynthesis; nicotine biosynthesis. Its pathway is amine and polyamine biosynthesis; putrescine biosynthesis via L-ornithine pathway; putrescine from L-ornithine: step 1/1. Its function is as follows. Involved in the biosynthesis of pyridine alkaloid natural products, leading mainly to the production of anabasine, anatabine, nicotine and nornicotine, effective deterrents against herbivores with antiparasitic and pesticide properties (neurotoxins); nornicotine serves as the precursor in the synthesis of the carcinogen compound N'-nitrosonornicotine (NNN). Catalyzes the first and rate-limiting step of polyamine biosynthesis that converts ornithine into putrescine, which is the precursor for the polyamines, spermidine and spermine. Polyamines are essential for cell proliferation and are implicated in cellular processes, ranging from DNA replication to apoptosis. This is Ornithine decarboxylase, chloroplastic from Nicotiana glauca (Glaucous tobacco).